The following is a 263-amino-acid chain: Antigen 10-3 (263 aa).

A signal peptide spans 1–21 (MNIYLIGILCIVGLIISQGST). The disordered stretch occupies residues 70–207 (GNKKDKQPTQ…QINDGTSDKP (138 aa)). Residues 78-90 (TQKTTPKPTTPKQ) show a composition bias toward low complexity. Repeat copies occupy residues 81–107 (TTPK…TIKR), 108–134 (TTPK…TIKR), 135–161 (TTPK…TIKR), 162–188 (TTPK…TIKR), and 189–206 (TTPK…TSDK). The 5 X 27 AA tandem repeats stretch occupies residues 81 to 189 (TTPKPTTPKQ…TSDTHTIKRT (109 aa)). Basic and acidic residues-rich tracts occupy residues 95-104 (TSDKTSDTHT), 122-131 (TSDKTSDTHT), 149-158 (TSDKTSDTHT), and 176-185 (TSDKTSDTHT).

This Schistosoma mansoni (Blood fluke) protein is Antigen 10-3.